The chain runs to 119 residues: Large ribosomal subunit protein bL20 (119 aa).

Belongs to the bacterial ribosomal protein bL20 family.

In terms of biological role, binds directly to 23S ribosomal RNA and is necessary for the in vitro assembly process of the 50S ribosomal subunit. It is not involved in the protein synthesizing functions of that subunit. The chain is Large ribosomal subunit protein bL20 from Enterococcus faecalis (strain ATCC 700802 / V583).